Here is a 4650-residue protein sequence, read N- to C-terminus: Nonribosomal peptide synthetase lenA (4650 aa).

Residues 227-628 (GSILDTIRAK…DGSVIHVGRK (402 aa)) form an adenylation 1 region. A Carrier 1 domain is found at 773 to 849 (PPETVLEKAL…KLAQYLRNTE (77 aa)). Ser-810 is modified (O-(pantetheine 4'-phosphoryl)serine). Residues 890–1212 (EDCYPCTALQ…CDFQSQLIFQ (323 aa)) are condensation 1. The interval 1288–1622 (ELELNAQKEP…RKIRPGYLGR (335 aa)) is adenylation 2. The Carrier 2 domain occupies 1745-1822 (PPVSAAEKKW…EIAALSETRD (78 aa)). Ser-1782 carries the O-(pantetheine 4'-phosphoryl)serine modification. The segment at 1850 to 2110 (ATNLIAATVH…GEKTRPGGGA (261 aa)) is condensation 2. The interval 2183–2511 (RCVHDLVHDA…RTGDLIKLRG (329 aa)) is adenylation 3. Residues 2630-2708 (APQNRLQHDI…EADVGLDHAS (79 aa)) form the Carrier 3 domain. Ser-2667 carries the O-(pantetheine 4'-phosphoryl)serine modification. Residues 2722–2998 (ESMARALAVI…KDARRRSPAN (277 aa)) are epimerase. The condensation 3 stretch occupies residues 3128–3565 (VQDVYPCTPI…VDDSQRQQIL (438 aa)). The tract at residues 3578–3980 (CVHHIIHQRC…FVGRKDNQIK (403 aa)) is adenylation 4. The region spanning 4114–4190 (TPSTPLEAQL…QLAAVLEEGA (77 aa)) is the Carrier 4 domain. Ser-4151 carries the O-(pantetheine 4'-phosphoryl)serine modification. The interval 4249 to 4648 (HMVLTFSQPV…TTTPEKLVAE (400 aa)) is condensation 4.

This sequence belongs to the NRP synthetase family. Requires pantetheine 4'-phosphate as cofactor.

The protein operates within alkaloid biosynthesis. Functionally, nonribosomal peptide synthetase; part of the gene cluster that mediates the biosynthesis of the ergot alkaloids lentopeptins A and B. Within the pathway, lenA catalyzes the biosynthesis of the Ala-Val-Ala peptide chain, including a cinnamic acid moiety as the starting unit. The release of the peptide from the enzyme is accomplished via a cyclization reaction catalyzed by the terminal condensation-like (Ct) domain of lenA to form the N-acyldiketopiperazine intermediate. The reaction appears to proceed through a nucleophilic attack on the carbonyl carbon by a lone electron pair of the valine amide nitrogen. The phenylalanine ammonia-lyase lenB provides the starter unit for the synthesis of the N-acyldiketopiperazine intermediate by the NRPS lenA, while the cytochrome P450 monooxygenase lenC is involved in the post-NRPS oxidative modification steps to form lentopeptins A and B. In Aspergillus lentulus, this protein is Nonribosomal peptide synthetase lenA.